Here is a 142-residue protein sequence, read N- to C-terminus: Alpha-lactalbumin (142 aa).

Residues 1–19 (MRFFVPLFLVGILFPAILA) form the signal peptide. The region spanning 20–142 (KQFTKCELSQ…KLEQWLCEKL (123 aa)) is the C-type lysozyme domain. 4 disulfides stabilise this stretch: C25–C139, C47–C130, C80–C96, and C92–C110. Residues T57 and Q58 each coordinate Ca(2+). N-linked (GlcNAc...) asparagine glycosylation occurs at N64. E68 lines the Zn(2+) pocket. Residue N90 is glycosylated (N-linked (GlcNAc...) asparagine; atypical; partial). Residues K98, L100, D101, D102, D103, D106, and D107 each coordinate Ca(2+). E135 serves as a coordination point for Zn(2+).

Belongs to the glycosyl hydrolase 22 family. As to quaternary structure, lactose synthase (LS) is a heterodimer of a catalytic component, beta1,4-galactosyltransferase (beta4Gal-T1) and a regulatory component, alpha-lactalbumin (LA). Mammary gland specific. Secreted in milk.

It is found in the secreted. Its function is as follows. Regulatory subunit of lactose synthase, changes the substrate specificity of galactosyltransferase in the mammary gland making glucose a good acceptor substrate for this enzyme. This enables LS to synthesize lactose, the major carbohydrate component of milk. In other tissues, galactosyltransferase transfers galactose onto the N-acetylglucosamine of the oligosaccharide chains in glycoproteins. This chain is Alpha-lactalbumin (LALBA), found in Homo sapiens (Human).